Here is a 215-residue protein sequence, read N- to C-terminus: Probable transaldolase (215 aa).

The active-site Schiff-base intermediate with substrate is the Lys84.

This sequence belongs to the transaldolase family. Type 3B subfamily.

It is found in the cytoplasm. The catalysed reaction is D-sedoheptulose 7-phosphate + D-glyceraldehyde 3-phosphate = D-erythrose 4-phosphate + beta-D-fructose 6-phosphate. It functions in the pathway carbohydrate degradation; pentose phosphate pathway; D-glyceraldehyde 3-phosphate and beta-D-fructose 6-phosphate from D-ribose 5-phosphate and D-xylulose 5-phosphate (non-oxidative stage): step 2/3. In terms of biological role, transaldolase is important for the balance of metabolites in the pentose-phosphate pathway. The chain is Probable transaldolase from Exiguobacterium sibiricum (strain DSM 17290 / CCUG 55495 / CIP 109462 / JCM 13490 / 255-15).